Here is a 488-residue protein sequence, read N- to C-terminus: Transmembrane protein 39A-B (488 aa).

N-linked (GlcNAc...) asparagine glycosylation is found at Asn31 and Asn39. 3 helical membrane passes run Gly72–Ile92, Thr110–Ala130, and Leu155–Val175. N-linked (GlcNAc...) asparagine glycosylation is present at Asn180. A helical membrane pass occupies residues Ser182 to Phe202. N-linked (GlcNAc...) asparagine glycosylation is present at Asn206. A run of 4 helical transmembrane segments spans residues Glu287–Val307, Cys319–Pro339, Leu420–Leu440, and Asn446–Leu466.

The protein belongs to the TMEM39 family.

It is found in the membrane. This is Transmembrane protein 39A-B (tmem39a-b) from Xenopus laevis (African clawed frog).